Reading from the N-terminus, the 419-residue chain is eIF5-mimic protein 1 (419 aa).

The interval 1–22 (MNKHQKPVLTGQRFKTRKRDEK) is disordered. At lysine 117 the chain carries N6-acetyllysine. Positions 248–415 (VQQSLGTRKE…QNAEEESESE (168 aa)) constitute a W2 domain. Serine 412 and serine 414 each carry phosphoserine.

Belongs to the BZW family. As to quaternary structure, interacts with EIF3E, EIF2S2 and EIF3C.

It localises to the cytoplasm. Functionally, translation initiation regulator which represses non-AUG initiated translation and repeat-associated non-AUG (RAN) initiated translation by acting as a competitive inhibitor of eukaryotic translation initiation factor 5 (EIF5) function. Increases the accuracy of translation initiation by impeding EIF5-dependent translation from non-AUG codons by competing with it for interaction with EIF2S2 within the 43S pre-initiation complex (PIC) in an EIF3C-binding dependent manner. This chain is eIF5-mimic protein 1 (BZW2), found in Macaca fascicularis (Crab-eating macaque).